We begin with the raw amino-acid sequence, 323 residues long: Phosphoribosylformylglycinamidine cyclo-ligase (323 aa).

It belongs to the AIR synthase family.

The protein localises to the cytoplasm. It carries out the reaction 2-formamido-N(1)-(5-O-phospho-beta-D-ribosyl)acetamidine + ATP = 5-amino-1-(5-phospho-beta-D-ribosyl)imidazole + ADP + phosphate + H(+). Its pathway is purine metabolism; IMP biosynthesis via de novo pathway; 5-amino-1-(5-phospho-D-ribosyl)imidazole from N(2)-formyl-N(1)-(5-phospho-D-ribosyl)glycinamide: step 2/2. This is Phosphoribosylformylglycinamidine cyclo-ligase from Saccharolobus solfataricus (strain ATCC 35092 / DSM 1617 / JCM 11322 / P2) (Sulfolobus solfataricus).